The primary structure comprises 137 residues: Small ribosomal subunit protein uS12 (137 aa).

Residues 1 to 57 are disordered; it reads MPTINQLVRKPRKSKVEKSKSPALNVGYNSHKKVQTNVSSPQKRGVATRVGTMTPKK. D102 carries the post-translational modification 3-methylthioaspartic acid.

This sequence belongs to the universal ribosomal protein uS12 family. Part of the 30S ribosomal subunit. Contacts proteins S8 and S17. May interact with IF1 in the 30S initiation complex.

Its function is as follows. With S4 and S5 plays an important role in translational accuracy. Interacts with and stabilizes bases of the 16S rRNA that are involved in tRNA selection in the A site and with the mRNA backbone. Located at the interface of the 30S and 50S subunits, it traverses the body of the 30S subunit contacting proteins on the other side and probably holding the rRNA structure together. The combined cluster of proteins S8, S12 and S17 appears to hold together the shoulder and platform of the 30S subunit. This Streptococcus sanguinis (strain SK36) protein is Small ribosomal subunit protein uS12.